A 938-amino-acid polypeptide reads, in one-letter code: Isoleucine--tRNA ligase (938 aa).

The 'HIGH' region motif lies at 65 to 75; sequence PYANGSIHIGH. An L-isoleucyl-5'-AMP-binding site is contributed by E568. Residues 609 to 613 carry the 'KMSKS' region motif; that stretch reads KMSKS. Residue K612 participates in ATP binding. Zn(2+)-binding residues include C905, C908, C921, and C924.

This sequence belongs to the class-I aminoacyl-tRNA synthetase family. IleS type 1 subfamily. In terms of assembly, monomer. Zn(2+) is required as a cofactor.

The protein resides in the cytoplasm. It catalyses the reaction tRNA(Ile) + L-isoleucine + ATP = L-isoleucyl-tRNA(Ile) + AMP + diphosphate. Its function is as follows. Catalyzes the attachment of isoleucine to tRNA(Ile). As IleRS can inadvertently accommodate and process structurally similar amino acids such as valine, to avoid such errors it has two additional distinct tRNA(Ile)-dependent editing activities. One activity is designated as 'pretransfer' editing and involves the hydrolysis of activated Val-AMP. The other activity is designated 'posttransfer' editing and involves deacylation of mischarged Val-tRNA(Ile). This is Isoleucine--tRNA ligase from Mannheimia succiniciproducens (strain KCTC 0769BP / MBEL55E).